Here is a 261-residue protein sequence, read N- to C-terminus: Glucose 1-dehydrogenase (261 aa).

NADP(+) is bound at residue 11-35 (VITGSSTGLGKSMAIRFATEKAKVV). Ser-145 lines the substrate pocket. Tyr-158 (proton acceptor) is an active-site residue.

The protein belongs to the short-chain dehydrogenases/reductases (SDR) family. In terms of assembly, homotetramer.

It catalyses the reaction D-glucose + NAD(+) = D-glucono-1,5-lactone + NADH + H(+). The enzyme catalyses D-glucose + NADP(+) = D-glucono-1,5-lactone + NADPH + H(+). The protein is Glucose 1-dehydrogenase of Priestia megaterium (Bacillus megaterium).